The sequence spans 449 residues: Bifunctional protein GlmU (449 aa).

The interval 1 to 225 is pyrophosphorylase; it reads MLSVAILAAG…NGELQGINNR (225 aa). Residues 7–10, Lys-21, Gln-73, and 78–79 each bind UDP-N-acetyl-alpha-D-glucosamine; these read LAAG and GT. A Mg(2+)-binding site is contributed by Asp-103. UDP-N-acetyl-alpha-D-glucosamine-binding residues include Gly-140, Glu-154, Asn-169, and Asn-223. Asn-223 is a Mg(2+) binding site. The linker stretch occupies residues 226-246; it reads IQLSKCEEIIQNSIKEKHMLN. The tract at residues 247 to 449 is N-acetyltransferase; sequence GVTFINQASC…NIDNWERKKP (203 aa). UDP-N-acetyl-alpha-D-glucosamine contacts are provided by Arg-328 and Lys-346. The active-site Proton acceptor is His-358. Residues Tyr-361 and Asn-372 each contribute to the UDP-N-acetyl-alpha-D-glucosamine site. Acetyl-CoA-binding residues include Ala-375, Ala-418, and Arg-435.

This sequence in the N-terminal section; belongs to the N-acetylglucosamine-1-phosphate uridyltransferase family. It in the C-terminal section; belongs to the transferase hexapeptide repeat family. Homotrimer. Mg(2+) serves as cofactor.

Its subcellular location is the cytoplasm. The enzyme catalyses alpha-D-glucosamine 1-phosphate + acetyl-CoA = N-acetyl-alpha-D-glucosamine 1-phosphate + CoA + H(+). It catalyses the reaction N-acetyl-alpha-D-glucosamine 1-phosphate + UTP + H(+) = UDP-N-acetyl-alpha-D-glucosamine + diphosphate. It functions in the pathway nucleotide-sugar biosynthesis; UDP-N-acetyl-alpha-D-glucosamine biosynthesis; N-acetyl-alpha-D-glucosamine 1-phosphate from alpha-D-glucosamine 6-phosphate (route II): step 2/2. Its pathway is nucleotide-sugar biosynthesis; UDP-N-acetyl-alpha-D-glucosamine biosynthesis; UDP-N-acetyl-alpha-D-glucosamine from N-acetyl-alpha-D-glucosamine 1-phosphate: step 1/1. The protein operates within bacterial outer membrane biogenesis; LPS lipid A biosynthesis. Functionally, catalyzes the last two sequential reactions in the de novo biosynthetic pathway for UDP-N-acetylglucosamine (UDP-GlcNAc). The C-terminal domain catalyzes the transfer of acetyl group from acetyl coenzyme A to glucosamine-1-phosphate (GlcN-1-P) to produce N-acetylglucosamine-1-phosphate (GlcNAc-1-P), which is converted into UDP-GlcNAc by the transfer of uridine 5-monophosphate (from uridine 5-triphosphate), a reaction catalyzed by the N-terminal domain. This chain is Bifunctional protein GlmU, found in Prochlorococcus marinus (strain MIT 9312).